We begin with the raw amino-acid sequence, 69 residues long: Alpha-elapitoxin-Lc2c (69 aa).

Disulfide bonds link cysteine 3-cysteine 20, cysteine 13-cysteine 41, cysteine 45-cysteine 56, and cysteine 57-cysteine 62.

The protein belongs to the three-finger toxin family. Long-chain subfamily. Type II alpha-neurotoxin sub-subfamily. In terms of tissue distribution, expressed by the venom gland.

The protein resides in the secreted. Functionally, binds with high affinity to muscular nicotinic acetylcholine receptors (nAChRs), whereas it binds with a low affinity to neuronal alpha-7/CHRNA7 nAChRs. In Laticauda colubrina (Yellow-lipped sea krait), this protein is Alpha-elapitoxin-Lc2c.